A 382-amino-acid chain; its full sequence is UDP-4-amino-4-deoxy-L-arabinose--oxoglutarate aminotransferase (382 aa).

Lysine 182 is modified (N6-(pyridoxal phosphate)lysine).

It belongs to the DegT/DnrJ/EryC1 family. ArnB subfamily. In terms of assembly, homodimer. Requires pyridoxal 5'-phosphate as cofactor.

It catalyses the reaction UDP-4-amino-4-deoxy-beta-L-arabinose + 2-oxoglutarate = UDP-beta-L-threo-pentopyranos-4-ulose + L-glutamate. It participates in nucleotide-sugar biosynthesis; UDP-4-deoxy-4-formamido-beta-L-arabinose biosynthesis; UDP-4-deoxy-4-formamido-beta-L-arabinose from UDP-alpha-D-glucuronate: step 2/3. It functions in the pathway bacterial outer membrane biogenesis; lipopolysaccharide biosynthesis. Its function is as follows. Catalyzes the conversion of UDP-4-keto-arabinose (UDP-Ara4O) to UDP-4-amino-4-deoxy-L-arabinose (UDP-L-Ara4N). The modified arabinose is attached to lipid A and is required for resistance to polymyxin and cationic antimicrobial peptides. The chain is UDP-4-amino-4-deoxy-L-arabinose--oxoglutarate aminotransferase from Yersinia enterocolitica serotype O:8 / biotype 1B (strain NCTC 13174 / 8081).